The primary structure comprises 335 residues: Holliday junction branch migration complex subunit RuvB (335 aa).

The tract at residues 1–181 is large ATPase domain (RuvB-L); that stretch reads MERIIEIEKM…FGMNFWMQFY (181 aa). Residues leucine 20, arginine 21, glycine 62, lysine 65, threonine 66, threonine 67, 128-130, arginine 171, tyrosine 181, and arginine 218 contribute to the ATP site; that span reads EDF. Threonine 66 is a Mg(2+) binding site. The small ATPAse domain (RuvB-S) stretch occupies residues 182 to 252; sequence NIEELSQIIT…QARYALHELG (71 aa). A head domain (RuvB-H) region spans residues 255-335; that stretch reads DHGFDDLDLR…LPFEPNATLF (81 aa). Residues arginine 309 and arginine 314 each contribute to the DNA site.

This sequence belongs to the RuvB family. As to quaternary structure, homohexamer. Forms an RuvA(8)-RuvB(12)-Holliday junction (HJ) complex. HJ DNA is sandwiched between 2 RuvA tetramers; dsDNA enters through RuvA and exits via RuvB. An RuvB hexamer assembles on each DNA strand where it exits the tetramer. Each RuvB hexamer is contacted by two RuvA subunits (via domain III) on 2 adjacent RuvB subunits; this complex drives branch migration. In the full resolvosome a probable DNA-RuvA(4)-RuvB(12)-RuvC(2) complex forms which resolves the HJ.

Its subcellular location is the cytoplasm. It catalyses the reaction ATP + H2O = ADP + phosphate + H(+). The RuvA-RuvB-RuvC complex processes Holliday junction (HJ) DNA during genetic recombination and DNA repair, while the RuvA-RuvB complex plays an important role in the rescue of blocked DNA replication forks via replication fork reversal (RFR). RuvA specifically binds to HJ cruciform DNA, conferring on it an open structure. The RuvB hexamer acts as an ATP-dependent pump, pulling dsDNA into and through the RuvAB complex. RuvB forms 2 homohexamers on either side of HJ DNA bound by 1 or 2 RuvA tetramers; 4 subunits per hexamer contact DNA at a time. Coordinated motions by a converter formed by DNA-disengaged RuvB subunits stimulates ATP hydrolysis and nucleotide exchange. Immobilization of the converter enables RuvB to convert the ATP-contained energy into a lever motion, pulling 2 nucleotides of DNA out of the RuvA tetramer per ATP hydrolyzed, thus driving DNA branch migration. The RuvB motors rotate together with the DNA substrate, which together with the progressing nucleotide cycle form the mechanistic basis for DNA recombination by continuous HJ branch migration. Branch migration allows RuvC to scan DNA until it finds its consensus sequence, where it cleaves and resolves cruciform DNA. This chain is Holliday junction branch migration complex subunit RuvB, found in Wolinella succinogenes (strain ATCC 29543 / DSM 1740 / CCUG 13145 / JCM 31913 / LMG 7466 / NCTC 11488 / FDC 602W) (Vibrio succinogenes).